We begin with the raw amino-acid sequence, 394 residues long: Putative bacilysin exporter BacE (394 aa).

The next 11 membrane-spanning stretches (helical) occupy residues 11-31 (LLYG…ALLI), 43-63 (SGVI…GVLV), 69-89 (IKIM…LTFL), 92-112 (GEYP…GVFF), 142-162 (IIVG…ELAV), 166-186 (GVTY…FVPI), 215-235 (MFTM…FPIV), 244-264 (IGNF…AALV), 288-308 (LFLF…FFIA), 332-352 (IFSV…MFIN), and 353-373 (ILSA…LFLH).

Belongs to the major facilitator superfamily. Drug:H(+) antiporter-3 (DHA3) (TC 2.A.1.21) family.

The protein resides in the cell membrane. Functionally, part of the bacilysin biosynthesis operon. May be involved in self-resistance to bacilysin by permitting efflux of this antibiotic. This chain is Putative bacilysin exporter BacE (bacE), found in Bacillus subtilis (strain 168).